The sequence spans 309 residues: MPIRVQDELPAVNFLREENVFVMKASRATGQEIRPLKVLILNLMPKKIETENQFLRLLSNSPLQVDVQLLRIDARESRNTPSEHLNNFYCDFEDIRNDNFDGLIVTGAPLGLVEFNDVAYWPQIKQVLEWAKDHVTSTLFVCWAVQAALNILYGIPKQTRSDKLSGVYEHHILHPHALLTRGFDDFFLAPHSRYADFPAALIRDYTDLEILAETEDGDAYLFASKDKRIAFVTGHPEYDAHTLASEFFRDVEAGLSPEVPYNYFPKNDPQIPPRASWRSHGNLLFINWLNYYVYQITPYDLRHMNPTLE.

Cys142 functions as the Acyl-thioester intermediate in the catalytic mechanism. Substrate is bound by residues Lys163 and Ser192. His235 serves as the catalytic Proton acceptor. Glu237 is a catalytic residue. Substrate is bound at residue Arg249.

Belongs to the MetA family.

Its subcellular location is the cytoplasm. It catalyses the reaction L-homoserine + succinyl-CoA = O-succinyl-L-homoserine + CoA. The protein operates within amino-acid biosynthesis; L-methionine biosynthesis via de novo pathway; O-succinyl-L-homoserine from L-homoserine: step 1/1. Transfers a succinyl group from succinyl-CoA to L-homoserine, forming succinyl-L-homoserine. This Enterobacter sp. (strain 638) protein is Homoserine O-succinyltransferase.